A 315-amino-acid chain; its full sequence is Protoheme IX farnesyltransferase (315 aa).

9 consecutive transmembrane segments (helical) span residues 32-52 (VMSL…GHMN), 53-73 (PVLA…SGAL), 93-113 (IPAG…LSAF), 120-140 (LMVN…YAVI), 153-173 (IVIG…AATG), 180-200 (LVLF…LSLF), 226-246 (ALFY…MGFA), 249-269 (FYGV…WRLW), and 295-315 (IFAV…FGVF).

Belongs to the UbiA prenyltransferase family. Protoheme IX farnesyltransferase subfamily.

It is found in the cell inner membrane. The enzyme catalyses heme b + (2E,6E)-farnesyl diphosphate + H2O = Fe(II)-heme o + diphosphate. It functions in the pathway porphyrin-containing compound metabolism; heme O biosynthesis; heme O from protoheme: step 1/1. Its function is as follows. Converts heme B (protoheme IX) to heme O by substitution of the vinyl group on carbon 2 of heme B porphyrin ring with a hydroxyethyl farnesyl side group. The polypeptide is Protoheme IX farnesyltransferase (Brucella suis (strain ATCC 23445 / NCTC 10510)).